Consider the following 452-residue polypeptide: Phosphoglucosamine mutase (452 aa).

The active-site Phosphoserine intermediate is Ser101. 4 residues coordinate Mg(2+): Ser101, Asp241, Asp243, and Asp245. Position 101 is a phosphoserine (Ser101).

Belongs to the phosphohexose mutase family. The cofactor is Mg(2+). Activated by phosphorylation.

It carries out the reaction alpha-D-glucosamine 1-phosphate = D-glucosamine 6-phosphate. Catalyzes the conversion of glucosamine-6-phosphate to glucosamine-1-phosphate. In Lactococcus lactis subsp. cremoris (strain MG1363), this protein is Phosphoglucosamine mutase.